Reading from the N-terminus, the 353-residue chain is Chorismate synthase (353 aa).

Residue R48 coordinates NADP(+). FMN contacts are provided by residues 128–130, G280, 295–299, and R321; these read RAS and KPIPS.

The protein belongs to the chorismate synthase family. Homotetramer. Requires FMNH2 as cofactor.

It carries out the reaction 5-O-(1-carboxyvinyl)-3-phosphoshikimate = chorismate + phosphate. It functions in the pathway metabolic intermediate biosynthesis; chorismate biosynthesis; chorismate from D-erythrose 4-phosphate and phosphoenolpyruvate: step 7/7. In terms of biological role, catalyzes the anti-1,4-elimination of the C-3 phosphate and the C-6 proR hydrogen from 5-enolpyruvylshikimate-3-phosphate (EPSP) to yield chorismate, which is the branch point compound that serves as the starting substrate for the three terminal pathways of aromatic amino acid biosynthesis. This reaction introduces a second double bond into the aromatic ring system. The protein is Chorismate synthase of Nitratidesulfovibrio vulgaris (strain DSM 19637 / Miyazaki F) (Desulfovibrio vulgaris).